We begin with the raw amino-acid sequence, 214 residues long: DELTA-actitoxin-Aeq1b (214 aa).

The signal sequence occupies residues 1-19; that stretch reads MSRLIIVFIVVTMICAATA. The propeptide occupies 20-35; that stretch reads LSSKKSINEDEKDEKR. The plays an important role in the hemolytic activity stretch occupies residues 38 to 47; that stretch reads AVAGAVIEGA. Residues 46-65 form an N-terminal region region; the sequence is GATLTFNVLQTVLKALGDIS. Phosphocholine-binding residues include serine 89, valine 122, serine 140, proline 142, tyrosine 168, tyrosine 172, and tyrosine 173. Residues 140–155 form a trp-rich region, which is important for the binding to lipid membrane region; sequence SIPFDYNLYSNWWNVK. The Cell attachment site, crucial for protein stability motif lies at 179-181; it reads RGD.

The protein belongs to the actinoporin family. Sea anemone subfamily. Octamer or nonamer in membranes. Monomer in the soluble state.

Its subcellular location is the secreted. The protein localises to the nematocyst. It is found in the target cell membrane. In terms of biological role, pore-forming protein that forms cations-selective hydrophilic pores of around 1 nm and causes cytolysis. Pore formation is a multi-step process that involves specific recognition of membrane sphingomyelin (but neither cholesterol nor phosphatidylcholine) using aromatic rich region and adjacent phosphocholine (POC) binding site, firm binding to the membrane (mainly driven by hydrophobic interactions) accompanied by the transfer of the N-terminal region to the lipid-water interface and finally pore formation after oligomerization of monomers. In Actinia equina (Beadlet anemone), this protein is DELTA-actitoxin-Aeq1b.